The chain runs to 267 residues: Hydroxyethylthiazole kinase 2 (267 aa).

Methionine 41 contributes to the substrate binding site. ATP is bound by residues lysine 116 and threonine 166. Glycine 193 lines the substrate pocket.

The protein belongs to the Thz kinase family. Mg(2+) is required as a cofactor.

It catalyses the reaction 5-(2-hydroxyethyl)-4-methylthiazole + ATP = 4-methyl-5-(2-phosphooxyethyl)-thiazole + ADP + H(+). It participates in cofactor biosynthesis; thiamine diphosphate biosynthesis; 4-methyl-5-(2-phosphoethyl)-thiazole from 5-(2-hydroxyethyl)-4-methylthiazole: step 1/1. In terms of biological role, catalyzes the phosphorylation of the hydroxyl group of 4-methyl-5-beta-hydroxyethylthiazole (THZ). In Streptococcus pneumoniae (strain P1031), this protein is Hydroxyethylthiazole kinase 2.